A 94-amino-acid polypeptide reads, in one-letter code: Secretoglobin family 1C member 1 (94 aa).

The signal sequence occupies residues 1–22; sequence MKGSSALLVALTVLCICGLTRA.

It belongs to the secretoglobin family. As to expression, expressed in the olfactory mucosa.

Its subcellular location is the secreted. The chain is Secretoglobin family 1C member 1 (Scgb1c1) from Rattus norvegicus (Rat).